The chain runs to 308 residues: Isoflavone reductase-like protein (308 aa).

Residues 11 to 17 (GGTGYIG), R36, and K45 each bind NADP(+). The active-site Proton acceptor is K133. Position 137 (R137) interacts with NADP(+).

The protein belongs to the NmrA-type oxidoreductase family. Isoflavone reductase subfamily. As to quaternary structure, homodimer.

Its subcellular location is the cytoplasm. The chain is Isoflavone reductase-like protein from Olea europaea (Common olive).